We begin with the raw amino-acid sequence, 507 residues long: Probable cytosol aminopeptidase (507 aa).

Positions 269 and 274 each coordinate Mn(2+). Lysine 281 is a catalytic residue. Residues aspartate 292, aspartate 351, and glutamate 353 each contribute to the Mn(2+) site. Arginine 355 is an active-site residue.

It belongs to the peptidase M17 family. It depends on Mn(2+) as a cofactor.

Its subcellular location is the cytoplasm. The catalysed reaction is Release of an N-terminal amino acid, Xaa-|-Yaa-, in which Xaa is preferably Leu, but may be other amino acids including Pro although not Arg or Lys, and Yaa may be Pro. Amino acid amides and methyl esters are also readily hydrolyzed, but rates on arylamides are exceedingly low.. It catalyses the reaction Release of an N-terminal amino acid, preferentially leucine, but not glutamic or aspartic acids.. Functionally, presumably involved in the processing and regular turnover of intracellular proteins. Catalyzes the removal of unsubstituted N-terminal amino acids from various peptides. The sequence is that of Probable cytosol aminopeptidase from Chromohalobacter salexigens (strain ATCC BAA-138 / DSM 3043 / CIP 106854 / NCIMB 13768 / 1H11).